A 253-amino-acid polypeptide reads, in one-letter code: uncharacterized protein (253 aa).

Residues 1–15 form the signal peptide; sequence MNRVILFHFHFFKNA.

This is an uncharacterized protein from Archaeoglobus fulgidus (strain ATCC 49558 / DSM 4304 / JCM 9628 / NBRC 100126 / VC-16).